The following is a 379-amino-acid chain: Putative glutamate--cysteine ligase 2 (379 aa).

Belongs to the glutamate--cysteine ligase type 2 family. YbdK subfamily.

The enzyme catalyses L-cysteine + L-glutamate + ATP = gamma-L-glutamyl-L-cysteine + ADP + phosphate + H(+). ATP-dependent carboxylate-amine ligase which exhibits weak glutamate--cysteine ligase activity. The polypeptide is Putative glutamate--cysteine ligase 2 (Roseiflexus sp. (strain RS-1)).